A 310-amino-acid polypeptide reads, in one-letter code: Putative S-adenosyl-L-methionine-dependent methyltransferase MSMEG_1888/MSMEI_1848 (310 aa).

S-adenosyl-L-methionine is bound by residues aspartate 128 and 157-158; that span reads DL.

This sequence belongs to the UPF0677 family.

Exhibits S-adenosyl-L-methionine-dependent methyltransferase activity. This chain is Putative S-adenosyl-L-methionine-dependent methyltransferase MSMEG_1888/MSMEI_1848, found in Mycolicibacterium smegmatis (strain ATCC 700084 / mc(2)155) (Mycobacterium smegmatis).